Here is a 600-residue protein sequence, read N- to C-terminus: MDKSKIRNFSIIAHIDHGKSTLADRILELTNTVTKREMQEQLLDSMDIERERGITIKLNSVQLYYKAKDGQEYTFHLIDTPGHVDFAYEVSRSLAACEGAILVVDATQGIEAQTLANVYLAIENNLEIIPVINKVDLPSADAERVKEEIENTIGIDCSDAPLISAKTGLNVEDVLEAIVNKIPAPYDADDAKPLRALIFDSYYDKYLGVVMSIRVREGSIKVGDRIKLMANGSSYEVTELGVKNPKIVKKDQLSAGEVGWVAASIKTIKDINVGDTITTVTNSALHPLDGYKKLKPMVYCGIYPIDTNQYQDFKEALEKMELSDSSLVYEPETSQALGFGFRVGFLGLLHMEVVQERLEREYNLNLIATAPSVIYKIHLTDGTMIEIDNPAKLPDPQKIKFMEEPFVNVKIMTPKESVGDLMSLCQNKLGTYKDLQVVDDNRMMLVYDMPLAEIIFDFFNKLKSISKGYASFEYEMIGYQESQLVKMDILLNGDMVDAFSMIVNKHFAYQRGAALTKKLKELIPRQNFEVPVQATIGNKVLARETIKAYRKDVTWKLHAADKSRRKKLLNKQKEGKKKMKEIGSVEVPQEAFIAVLKLDD.

The tr-type G domain maps to 4–186 (SKIRNFSIIA…AIVNKIPAPY (183 aa)). Residues 16–21 (DHGKST) and 133–136 (NKVD) contribute to the GTP site.

It belongs to the TRAFAC class translation factor GTPase superfamily. Classic translation factor GTPase family. LepA subfamily.

The protein localises to the cell membrane. It carries out the reaction GTP + H2O = GDP + phosphate + H(+). Functionally, required for accurate and efficient protein synthesis under certain stress conditions. May act as a fidelity factor of the translation reaction, by catalyzing a one-codon backward translocation of tRNAs on improperly translocated ribosomes. Back-translocation proceeds from a post-translocation (POST) complex to a pre-translocation (PRE) complex, thus giving elongation factor G a second chance to translocate the tRNAs correctly. Binds to ribosomes in a GTP-dependent manner. This chain is Elongation factor 4, found in Mesoplasma florum (strain ATCC 33453 / NBRC 100688 / NCTC 11704 / L1) (Acholeplasma florum).